Reading from the N-terminus, the 794-residue chain is Signal transducer and activator of transcription 5A (794 aa).

A Phosphotyrosine modification is found at tyrosine 90. Serine 129 is subject to Phosphoserine. Residues tryptophan 589–valine 686 enclose the SH2 domain. Residue tyrosine 682 is modified to Phosphotyrosine. A Phosphotyrosine; by JAK2 modification is found at tyrosine 694. A disordered region spans residues glutamate 765 to serine 794.

The protein belongs to the transcription factor STAT family. Forms a homodimer or a heterodimer with a related family member. Binds NR3C1. Interacts with NCOA1 and SOCS7. Interacts with ERBB4. Interacts with EBF4. Interacts with CD69. ISGylated. In terms of processing, tyrosine phosphorylated in response to KITLG/SCF, IL2, IL3, IL7, IL15, CSF2/GMCSF, GH1, PRL, EPO and THPO. Activated KIT promotes phosphorylation on tyrosine residues and subsequent translocation to the nucleus. Tyrosine phosphorylated in response to constitutively activated FGFR1, FGFR2, FGFR3 and FGFR4. Tyrosine phosphorylation is required for DNA-binding activity and dimerization. Serine phosphorylation is also required for maximal transcriptional activity. Tyrosine phosphorylated in response to signaling via activated FLT3; wild-type FLT3 results in much weaker phosphorylation than constitutively activated mutant FLT3. Alternatively, can be phosphorylated by JAK2 at Tyr-694. Found in mammary gland and, in lesser extent, in ovary, thymus, spleen, kidney, lung, muscle and adrenal gland.

The protein resides in the cytoplasm. It localises to the nucleus. Functionally, carries out a dual function: signal transduction and activation of transcription. Mediates cellular responses to the cytokine KITLG/SCF and other growth factors. May mediate cellular responses to activated FGFR1, FGFR2, FGFR3 and FGFR4. Binds to the GAS element and activates PRL-induced transcription. Regulates the expression of milk proteins during lactation. The protein is Signal transducer and activator of transcription 5A (STAT5A) of Ovis aries (Sheep).